The sequence spans 475 residues: Bifunctional protein HldE (475 aa).

Residues 1–318 (MKITLPEFEK…ANALYTEQET (318 aa)) are ribokinase. 195–198 (NMSE) provides a ligand contact to ATP. The active site involves Asp264. The interval 344–475 (MTNGCFDILH…DIIKTIRERG (132 aa)) is cytidylyltransferase.

It in the N-terminal section; belongs to the carbohydrate kinase PfkB family. In the C-terminal section; belongs to the cytidylyltransferase family. Homodimer.

The enzyme catalyses D-glycero-beta-D-manno-heptose 7-phosphate + ATP = D-glycero-beta-D-manno-heptose 1,7-bisphosphate + ADP + H(+). The catalysed reaction is D-glycero-beta-D-manno-heptose 1-phosphate + ATP + H(+) = ADP-D-glycero-beta-D-manno-heptose + diphosphate. The protein operates within nucleotide-sugar biosynthesis; ADP-L-glycero-beta-D-manno-heptose biosynthesis; ADP-L-glycero-beta-D-manno-heptose from D-glycero-beta-D-manno-heptose 7-phosphate: step 1/4. Its pathway is nucleotide-sugar biosynthesis; ADP-L-glycero-beta-D-manno-heptose biosynthesis; ADP-L-glycero-beta-D-manno-heptose from D-glycero-beta-D-manno-heptose 7-phosphate: step 3/4. Its function is as follows. Catalyzes the phosphorylation of D-glycero-D-manno-heptose 7-phosphate at the C-1 position to selectively form D-glycero-beta-D-manno-heptose-1,7-bisphosphate. In terms of biological role, catalyzes the ADP transfer from ATP to D-glycero-beta-D-manno-heptose 1-phosphate, yielding ADP-D-glycero-beta-D-manno-heptose. In Aeromonas hydrophila subsp. hydrophila (strain ATCC 7966 / DSM 30187 / BCRC 13018 / CCUG 14551 / JCM 1027 / KCTC 2358 / NCIMB 9240 / NCTC 8049), this protein is Bifunctional protein HldE.